A 275-amino-acid chain; its full sequence is C-type lectin domain family 12 member B (275 aa).

Over M1 to G41 the chain is Cytoplasmic. The short motif at V5 to L10 is the ITIM motif element. The residue at position 7 (Y7) is a Phosphotyrosine. A helical; Signal-anchor for type II membrane protein transmembrane segment spans residues A42–F64. Topologically, residues L65 to D275 are extracellular. N91, N175, and N236 each carry an N-linked (GlcNAc...) asparagine glycan. The 115-residue stretch at Y149 to E263 folds into the C-type lectin domain. 2 disulfides stabilise this stretch: C171–C262 and C241–C254.

Homodimer. Interacts (via ITIM motif) with PTPN6. Interacts (via ITIM motif) with PTPN11; this interaction triggers dephosphorylation and activation of PTPN11.

It localises to the cell membrane. Inhibitory receptor postulated to negatively regulate immune and non-immune functions. Upon phosphorylation, recruits SH2 domain-containing PTPN6 and PTPN11 phosphatases to its ITIM motif and antagonizes activation signals. Although it inhibits KLRK1/NKG2D-mediated signaling, it does not bind known ligands of KLRK1/NKG2D and therefore is not its inhibitory counterpart. May limit activation of myeloid cell subsets in response to infection or tissue inflammation. May protect target cells against natural killer cell-mediated lysis. May negatively regulate cell cycle and differentiation of melanocytes via inactivation of STAT3. The polypeptide is C-type lectin domain family 12 member B (Clec12b) (Mus musculus (Mouse)).